Consider the following 393-residue polypeptide: NAD(P)H-quinone oxidoreductase subunit H, chloroplastic (393 aa).

It belongs to the complex I 49 kDa subunit family. As to quaternary structure, NDH is composed of at least 16 different subunits, 5 of which are encoded in the nucleus.

The protein localises to the plastid. The protein resides in the chloroplast thylakoid membrane. The enzyme catalyses a plastoquinone + NADH + (n+1) H(+)(in) = a plastoquinol + NAD(+) + n H(+)(out). It catalyses the reaction a plastoquinone + NADPH + (n+1) H(+)(in) = a plastoquinol + NADP(+) + n H(+)(out). Functionally, NDH shuttles electrons from NAD(P)H:plastoquinone, via FMN and iron-sulfur (Fe-S) centers, to quinones in the photosynthetic chain and possibly in a chloroplast respiratory chain. The immediate electron acceptor for the enzyme in this species is believed to be plastoquinone. Couples the redox reaction to proton translocation, and thus conserves the redox energy in a proton gradient. The polypeptide is NAD(P)H-quinone oxidoreductase subunit H, chloroplastic (Platanus occidentalis (Sycamore)).